Consider the following 213-residue polypeptide: 3-isopropylmalate dehydratase small subunit (213 aa).

It belongs to the LeuD family. LeuD type 1 subfamily. As to quaternary structure, heterodimer of LeuC and LeuD.

The enzyme catalyses (2R,3S)-3-isopropylmalate = (2S)-2-isopropylmalate. It functions in the pathway amino-acid biosynthesis; L-leucine biosynthesis; L-leucine from 3-methyl-2-oxobutanoate: step 2/4. In terms of biological role, catalyzes the isomerization between 2-isopropylmalate and 3-isopropylmalate, via the formation of 2-isopropylmaleate. This is 3-isopropylmalate dehydratase small subunit from Neisseria meningitidis serogroup C (strain 053442).